The following is a 592-amino-acid chain: RNA-binding protein 47 (592 aa).

Residues 1–24 (MTAEDAAAAMSSDSAAGGAASAKA) show a composition bias toward low complexity. The interval 1–26 (MTAEDAAAAMSSDSAAGGAASAKAPE) is disordered. 3 RRM domains span residues 73 to 151 (CEVF…CSVD), 153 to 235 (CRLF…WAEP), and 248 to 320 (KILY…LAKP). 2 positions are modified to asymmetric dimethylarginine; alternate: Arg-397 and Arg-408. 2 positions are modified to omega-N-methylarginine; alternate: Arg-397 and Arg-408.

It belongs to the RRM RBM47 family. As to quaternary structure, homodimer. Interacts with A1CF. Interacts with APOBEC1; form an mRNA editing complex. Interacts with RBPMS.

It localises to the nucleus. It is found in the cytoplasm. Functionally, single-stranded RNA-binding protein that functions in a variety of RNA processes, including alternative splicing, RNA stabilization, and RNA editing. Functions as an enzyme-substrate adapter for the cytidine deaminase APOBEC1. With APOBEC1 forms an mRNA editing complex involved into cytidine to uridine editing of a variety of mRNA molecules. Through the binding of their 3'UTR, also stabilizes a variety of mRNAs and regulates the expression of genes such as the interferon alpha/beta receptor and interleukin-10. Also involved in the alternative splicing of several genes including TJP1. Binds the pre-mRNA (U)GCAUG consensus sequences in downstream intronic regions of alternative exons, regulating their exclusion and inclusion into mRNAs. Independently of its RNA-binding activity, could negatively regulate MAVS by promoting its lysosomal degradation. In Canis lupus familiaris (Dog), this protein is RNA-binding protein 47.